Reading from the N-terminus, the 560-residue chain is Eukaryotic translation initiation factor 3 subunit D-1 (560 aa).

The disordered stretch occupies residues 98–166; that stretch reads VQKPPHQRGR…RGPPPKMRES (69 aa). Basic residues predominate over residues 100–121; the sequence is KPPHQRGRFRNMRNSRSGRGRN. A Phosphothreonine modification is found at Thr-128. Residues 147–156 are compositionally biased toward basic residues; the sequence is GRGMGKKFGH. An RNA gate region spans residues 291–305; the sequence is EFDLLTVNESSVEPP.

This sequence belongs to the eIF-3 subunit D family. In terms of assembly, component of the eukaryotic translation initiation factor 3 (eIF-3) complex. The eIF-3 complex interacts with pix.

The protein resides in the cytoplasm. Its function is as follows. mRNA cap-binding component of the eukaryotic translation initiation factor 3 (eIF-3) complex, which is involved in protein synthesis of a specialized repertoire of mRNAs and, together with other initiation factors, stimulates binding of mRNA and methionyl-tRNAi to the 40S ribosome. The eIF-3 complex specifically targets and initiates translation of a subset of mRNAs involved in cell proliferation. In the eIF-3 complex, eif3d specifically recognizes and binds the 7-methylguanosine cap of a subset of mRNAs. In Drosophila sechellia (Fruit fly), this protein is Eukaryotic translation initiation factor 3 subunit D-1.